The primary structure comprises 89 residues: Small ribosomal subunit protein uS15 (89 aa).

It belongs to the universal ribosomal protein uS15 family. As to quaternary structure, part of the 30S ribosomal subunit. Forms a bridge to the 50S subunit in the 70S ribosome, contacting the 23S rRNA.

Functionally, one of the primary rRNA binding proteins, it binds directly to 16S rRNA where it helps nucleate assembly of the platform of the 30S subunit by binding and bridging several RNA helices of the 16S rRNA. In terms of biological role, forms an intersubunit bridge (bridge B4) with the 23S rRNA of the 50S subunit in the ribosome. The sequence is that of Small ribosomal subunit protein uS15 from Halalkalibacterium halodurans (strain ATCC BAA-125 / DSM 18197 / FERM 7344 / JCM 9153 / C-125) (Bacillus halodurans).